The following is a 370-amino-acid chain: Coproporphyrin III ferrochelatase (370 aa).

Residues S58 and Y127 each contribute to the Fe-coproporphyrin III site. Positions 189 and 276 each coordinate Fe(2+).

This sequence belongs to the ferrochelatase family.

It localises to the cytoplasm. It catalyses the reaction Fe-coproporphyrin III + 2 H(+) = coproporphyrin III + Fe(2+). Its pathway is porphyrin-containing compound metabolism; protoheme biosynthesis. Functionally, involved in coproporphyrin-dependent heme b biosynthesis. Catalyzes the insertion of ferrous iron into coproporphyrin III to form Fe-coproporphyrin III. This Corynebacterium glutamicum (strain R) protein is Coproporphyrin III ferrochelatase.